We begin with the raw amino-acid sequence, 1077 residues long: ATP-dependent helicase HRQ1 (1077 aa).

Residues 299-483 (INSLHQGENV…DMFGINEVTL (185 aa)) form the Helicase ATP-binding domain. 312 to 319 (TSTSSGKS) serves as a coordination point for ATP. Positions 423–426 (DELH) match the DEAH box motif. One can recognise a Helicase C-terminal domain in the interval 521-678 (ILVQLILNNV…DLVLDFNNIL (158 aa)).

The protein belongs to the helicase family. HRQ1 subfamily. Forms heptamer rings. Interacts with RAD4. The cofactor is Mg(2+).

It localises to the nucleus. The catalysed reaction is Couples ATP hydrolysis with the unwinding of duplex DNA by translocating in the 3'-5' direction.. It carries out the reaction ATP + H2O = ADP + phosphate + H(+). Its function is as follows. Helicase with 3'-5' helicase activity involved in genome stability. Functions in the RAD4-dependent nucleotide excision repair (NER) pathway and plays a critical role in DNA interstrand cross-link repair. Unwinds relatively long duplex DNA up to 120-bp and requires a long 3'-tail of at least 70 nucleotides for efficient unwinding of duplex DNA. Activity is significantly stimulated by a preexisting fork structure. Shows both processive helicase and DNA strand annealing activities. Affects telomere length by a non-catalytic mechanism, probably through inhibiting telomerase by competing with it for ssDNA binding. In Saccharomyces cerevisiae (strain ATCC 204508 / S288c) (Baker's yeast), this protein is ATP-dependent helicase HRQ1.